A 693-amino-acid chain; its full sequence is Translation factor GUF1 homolog, chloroplastic (693 aa).

Residues 1 to 51 (MATDLSSSSTLLLSRNCKTPPFYHTTNSLSLSKTHHLYASRNAVVSRLRLL) constitute a chloroplast transit peptide. Positions 86–267 (SNIRNFCIIA…AIVERIPSPR (182 aa)) constitute a tr-type G domain. GTP is bound by residues 95-102 (AHIDHGKS), 160-164 (DTPGH), and 214-217 (NKID).

Belongs to the TRAFAC class translation factor GTPase superfamily. Classic translation factor GTPase family. LepA subfamily.

The protein localises to the plastid. Its subcellular location is the chloroplast. The enzyme catalyses GTP + H2O = GDP + phosphate + H(+). Promotes chloroplast protein synthesis. May act as a fidelity factor of the translation reaction, by catalyzing a one-codon backward translocation of tRNAs on improperly translocated ribosomes. This Ricinus communis (Castor bean) protein is Translation factor GUF1 homolog, chloroplastic.